The chain runs to 249 residues: Small ribosomal subunit protein uS5 (249 aa).

Over residues 1 to 14 (MSAEAPKRQFGDRR) the composition is skewed to basic and acidic residues. Positions 1 to 29 (MSAEAPKRQFGDRRRGGRRGGRRDGEEKG) are disordered. The S5 DRBM domain maps to 71 to 134 (LKDDVMKIRS…VIAKLSIIPI (64 aa)).

It belongs to the universal ribosomal protein uS5 family. In terms of assembly, component of the small ribosomal subunit. Mature ribosomes consist of a small (40S) and a large (60S) subunit. The 40S subunit contains about 32 different proteins and 1 molecule of RNA (18S). The 60S subunit contains 45 different proteins and 3 molecules of RNA (25S, 5.8S and 5S).

Its subcellular location is the cytoplasm. Component of the ribosome, a large ribonucleoprotein complex responsible for the synthesis of proteins in the cell. The small ribosomal subunit (SSU) binds messenger RNAs (mRNAs) and translates the encoded message by selecting cognate aminoacyl-transfer RNA (tRNA) molecules. The large subunit (LSU) contains the ribosomal catalytic site termed the peptidyl transferase center (PTC), which catalyzes the formation of peptide bonds, thereby polymerizing the amino acids delivered by tRNAs into a polypeptide chain. The nascent polypeptides leave the ribosome through a tunnel in the LSU and interact with protein factors that function in enzymatic processing, targeting, and the membrane insertion of nascent chains at the exit of the ribosomal tunnel. RPS2 is important for the assembly and function of the 40S ribosomal subunitand is nvolved in nucleolar processing of pre-18S ribosomal RNA and ribosome assembly. This is Small ribosomal subunit protein uS5 (RPS21) from Candida albicans (strain SC5314 / ATCC MYA-2876) (Yeast).